We begin with the raw amino-acid sequence, 254 residues long: MKITAIIPARYASTRFPGKALAEIIGKPMVQHVYERTAKAGLVSEVIVATDDERVAEAVRAFGGRVEMTSATHETGTDRLAEVAARIDADIIVNVQGDEPLIEPAMIDEAIAPLVADASIRMGTLKSRIKSLHDFLSPNVVKVVTDREGDALYFSRSPLPNFRDKWNDLKDEAFVTGRLLCYKHVGLYVYRRDFLLAFARMAPTPLELAEKLEQLRVLENGFRIRVVETSFESIGVDTPSDLDKVVEKLSRFQI.

Belongs to the KdsB family.

It is found in the cytoplasm. The catalysed reaction is 3-deoxy-alpha-D-manno-oct-2-ulosonate + CTP = CMP-3-deoxy-beta-D-manno-octulosonate + diphosphate. Its pathway is nucleotide-sugar biosynthesis; CMP-3-deoxy-D-manno-octulosonate biosynthesis; CMP-3-deoxy-D-manno-octulosonate from 3-deoxy-D-manno-octulosonate and CTP: step 1/1. It participates in bacterial outer membrane biogenesis; lipopolysaccharide biosynthesis. Activates KDO (a required 8-carbon sugar) for incorporation into bacterial lipopolysaccharide in Gram-negative bacteria. This Geobacter metallireducens (strain ATCC 53774 / DSM 7210 / GS-15) protein is 3-deoxy-manno-octulosonate cytidylyltransferase.